A 148-amino-acid chain; its full sequence is Protein E6 (148 aa).

Zinc fingers lie at residues 29-65 (CVFC…CARC) and 102-138 (CYTC…CAYC).

The protein belongs to the papillomaviridae E6 protein family. In terms of assembly, forms homodimers. Interacts with ubiquitin-protein ligase UBE3A/E6-AP; this interaction stimulates UBE3A ubiquitin activity. Interacts with host TP53 and EP300; this interaction inhibits TP53 activity.

It localises to the host cytoplasm. The protein resides in the host nucleus. Its function is as follows. Plays a major role in the induction and maintenance of cellular transformation. E6 associates with host UBE3A/E6-AP ubiquitin-protein ligase and modulates its activity. Sequesters tumor suppressor TP53 in the host cytoplasm and modulates its activity by interacting with host EP300 that results in the reduction of TP53 acetylation and activation. In turn, apoptosis induced by DNA damage is inhibited. E6 also protects host keratinocytes from apoptosis by mediating the degradation of host BAK1. May also inhibit host immune response. The sequence is that of Protein E6 from Homo sapiens (Human).